A 155-amino-acid chain; its full sequence is Ribosomal RNA large subunit methyltransferase H (155 aa).

S-adenosyl-L-methionine contacts are provided by residues leucine 72, glycine 103, and 122 to 127 (FGRMVW).

It belongs to the RNA methyltransferase RlmH family. In terms of assembly, homodimer.

The protein localises to the cytoplasm. The enzyme catalyses pseudouridine(1915) in 23S rRNA + S-adenosyl-L-methionine = N(3)-methylpseudouridine(1915) in 23S rRNA + S-adenosyl-L-homocysteine + H(+). Specifically methylates the pseudouridine at position 1915 (m3Psi1915) in 23S rRNA. In Cereibacter sphaeroides (strain ATCC 17023 / DSM 158 / JCM 6121 / CCUG 31486 / LMG 2827 / NBRC 12203 / NCIMB 8253 / ATH 2.4.1.) (Rhodobacter sphaeroides), this protein is Ribosomal RNA large subunit methyltransferase H.